Here is a 201-residue protein sequence, read N- to C-terminus: Ephrin-A4 (201 aa).

The first 25 residues, 1 to 25 (MRLLPLLRTVLWAAFLGSPLRGGSS), serve as a signal peptide directing secretion. Positions 26-155 (LRHVVYWNSS…RLQVSVCCKE (130 aa)) constitute an Ephrin RBD domain. N-linked (GlcNAc...) asparagine glycosylation occurs at N33. 2 disulfide bridges follow: C58/C99 and C86/C144. S170 carries GPI-anchor amidated serine lipidation. The propeptide at 171–201 (GTSGWRGGDTPSPLCLLLLLLLLILRLLRIL) is removed in mature form.

The protein belongs to the ephrin family. Expressed in the adult spleen, lymph node, prostate, ovary, small intestine, and colon, and in fetal heart, lung, liver and kidney. Also detected in hematopoietic cell lines.

The protein localises to the cell membrane. It localises to the secreted. Cell surface GPI-bound ligand for Eph receptors, a family of receptor tyrosine kinases which are crucial for migration, repulsion and adhesion during neuronal, vascular and epithelial development. Binds promiscuously Eph receptors residing on adjacent cells, leading to contact-dependent bidirectional signaling into neighboring cells. May play a role in the interaction between activated B-lymphocytes and dendritic cells in tonsils. The protein is Ephrin-A4 (EFNA4) of Homo sapiens (Human).